Consider the following 293-residue polypeptide: Membrane protein RL13 (293 aa).

The signal sequence occupies residues 1 to 19 (MHWHLAITWTVIILTFSEC). A helical transmembrane segment spans residues 245–265 (IPLGIHAVWAGIVVSVALIAL).

It is found in the virion membrane. May play a role in modifying tropism or in modulating cell signaling during virus entry. Since RL13 expression severely impairs HCMV replication in epithelial cell cultures, it may act as a regulator promoting persistence by suppressing the switch to fully lytic infection. The protein is Membrane protein RL13 (RL13) of Human cytomegalovirus (strain Merlin) (HHV-5).